A 266-amino-acid chain; its full sequence is Type III pantothenate kinase (266 aa).

6–13 (DAGNTNIV) is a binding site for ATP. 107–110 (GADR) lines the substrate pocket. Asp109 acts as the Proton acceptor in catalysis. Asp129 contributes to the K(+) binding site. Thr132 is a binding site for ATP. Substrate is bound at residue Thr184.

Belongs to the type III pantothenate kinase family. In terms of assembly, homodimer. NH4(+) is required as a cofactor. It depends on K(+) as a cofactor.

Its subcellular location is the cytoplasm. The enzyme catalyses (R)-pantothenate + ATP = (R)-4'-phosphopantothenate + ADP + H(+). It functions in the pathway cofactor biosynthesis; coenzyme A biosynthesis; CoA from (R)-pantothenate: step 1/5. In terms of biological role, catalyzes the phosphorylation of pantothenate (Pan), the first step in CoA biosynthesis. The polypeptide is Type III pantothenate kinase (Acidiphilium cryptum (strain JF-5)).